Consider the following 401-residue polypeptide: Histone acetyltransferase type B subunit 2 (401 aa).

5 WD repeats span residues 116–147 (EHEE…FLYS), 158–189 (FHKD…ALWE), 206–237 (LHSD…KIND), 249–280 (KCPQ…YLYD), and 293–324 (GHED…MMWD). Residues 335 to 339 (DDAED) are interaction with the histone H4 N-terminus. A WD 6 repeat occupies 350–381 (GHRSSVNDFDLNPQIPWLVASAEEENILQVWK).

The protein belongs to the WD repeat RBAP46/RBAP48/MSI1 family. Component of the HAT-B complex composed of at least HAT1 and HAT2. In the cytoplasm, this complex binds to the histone H4 tail. In the nucleus, the HAT-B complex has an additional component, the histone H3/H4 chaperone HIF1.

It is found in the cytoplasm. The protein resides in the nucleus. Its function is as follows. Regulatory subunit of the histone acetylase B (HAT-B) complex. The complex acetylates 'Lys-12' of histone H4 which is required for telomeric silencing. HAT2 is required for high affinity binding of the acetyltransferase to histone H4, for the nuclear location of HAT1 and for the HAT1-HIF1 interaction. Alone, it is unable to bind to H4, requiring HAT1 for high affinity interaction with the histone tail. HAT2 also has a HAT1 independent function in life-span regulation. This is Histone acetyltransferase type B subunit 2 (HAT2) from Saccharomyces cerevisiae (strain ATCC 204508 / S288c) (Baker's yeast).